The primary structure comprises 336 residues: PTS system glucitol/sorbitol-specific EIIB component (336 aa).

Positions 3 to 195 (KYNAIKIVKG…AVQSMITTIL (193 aa)) constitute a PTS EIIB type-5 domain. The Phosphocysteine intermediate; for EIIB activity role is filled by cysteine 75. Cysteine 75 carries the post-translational modification Phosphocysteine; by EIIA. A run of 5 helical transmembrane segments spans residues 194 to 214 (ILPF…SGFG), 228 to 248 (GIGL…ALLG), 250 to 270 (GAVI…KGTI), 278 to 298 (ALFA…LGLA), and 312 to 332 (VLYS…VASI).

Its subcellular location is the cell membrane. The enzyme catalyses D-sorbitol(out) + N(pros)-phospho-L-histidyl-[protein] = D-sorbitol 6-phosphate(in) + L-histidyl-[protein]. Functionally, the phosphoenolpyruvate-dependent sugar phosphotransferase system (sugar PTS), a major carbohydrate active transport system, catalyzes the phosphorylation of incoming sugar substrates concomitantly with their translocation across the cell membrane. The enzyme II complex composed of SrlA, SrlB and SrlE is involved in glucitol/sorbitol transport. The chain is PTS system glucitol/sorbitol-specific EIIB component (srlE) from Clostridium beijerinckii (strain ATCC 51743 / NCIMB 8052) (Clostridium acetobutylicum).